A 369-amino-acid chain; its full sequence is Galactose-1-phosphate uridylyltransferase (369 aa).

Residues Cys54 and Cys57 each coordinate Zn(2+). UDP-alpha-D-glucose is bound by residues Ala63 and 79–80 (ND). His127 is a Zn(2+) binding site. Position 172 (Asn172) interacts with UDP-alpha-D-glucose. His183 provides a ligand contact to Zn(2+). His185 (tele-UMP-histidine intermediate) is an active-site residue. Gln187 contributes to the UDP-alpha-D-glucose binding site. 4 residues coordinate Fe cation: Glu201, His300, His317, and His319. UDP-alpha-D-glucose contacts are provided by residues 332–335 (KFCV) and 337–338 (FE).

This sequence belongs to the galactose-1-phosphate uridylyltransferase type 1 family. In terms of assembly, homodimer. Zn(2+) is required as a cofactor.

It carries out the reaction alpha-D-galactose 1-phosphate + UDP-alpha-D-glucose = alpha-D-glucose 1-phosphate + UDP-alpha-D-galactose. Its pathway is carbohydrate metabolism; galactose metabolism. This Schizosaccharomyces pombe (strain 972 / ATCC 24843) (Fission yeast) protein is Galactose-1-phosphate uridylyltransferase (gal7).